A 73-amino-acid chain; its full sequence is Disintegrin trigramin-beta-2 (73 aa).

The region spanning 1-73 (EAGKDCDCGS…AGCPRNPFHA (73 aa)) is the Disintegrin domain. Intrachain disulfides connect C6–C21, C8–C16, C15–C38, C29–C35, C34–C59, and C47–C66. Positions 51-53 (RGD) match the Cell attachment site motif.

It belongs to the venom metalloproteinase (M12B) family. P-II subfamily. P-IIa sub-subfamily. In terms of assembly, monomer (disintegrin). In terms of tissue distribution, expressed by the venom gland.

Its subcellular location is the secreted. Inhibits fibrinogen interaction with platelets. Acts by binding to the alpha-IIb/beta-3 receptor (ITGA2B/ITGB3) on the platelet surface and inhibits aggregation induced by ADP, thrombin, platelet-activating factor and collagen. This Craspedocephalus gramineus (Bamboo pit viper) protein is Disintegrin trigramin-beta-2.